An 82-amino-acid polypeptide reads, in one-letter code: Consomatin Mao1 (82 aa).

Positions 1 to 22 are cleaved as a signal peptide; that stretch reads MQTASWVMVMMMVWITAPLSEG. Positions 23–57 are excised as a propeptide; the sequence is GKLNDVIRGLVPDDVTPQLILRSLFFHRPSDSVVR. C65 and C70 are oxidised to a cystine. W67 is modified (D-tryptophan). 4-hydroxyproline is present on residues P71, P72, and P74. Residues 75–82 constitute a propeptide that is removed on maturation; that stretch reads WRRPNGKG.

The protein belongs to the conotoxin C superfamily. Consomatin family. Expressed by the venom duct.

It is found in the secreted. In terms of biological role, moderately activates human somatostatin receptors (SSTR) with a preferential activation of SSTR1 and SSTR4. In vivo, does not cause behavioral changes in mice within a few minutes of intracranial injection, but causes a progressive loss of movement thereafter. Four to five hours after injection, mice recover, even with the highest dose tested. Shows antinociception and antihyperalgesia activities in two mouse models of acute pain, most probably by acting outside the central nervous system. The protein is Consomatin Mao1 of Conus maioensis (Sea snail).